The following is an 882-amino-acid chain: DNA mismatch repair protein MutS (882 aa).

629 to 636 (GPNMGGKS) lines the ATP pocket.

Belongs to the DNA mismatch repair MutS family.

Its function is as follows. This protein is involved in the repair of mismatches in DNA. It is possible that it carries out the mismatch recognition step. This protein has a weak ATPase activity. The chain is DNA mismatch repair protein MutS from Ralstonia pickettii (strain 12J).